The following is a 126-amino-acid chain: Large ribosomal subunit protein bL12 (126 aa).

It belongs to the bacterial ribosomal protein bL12 family. As to quaternary structure, homodimer. Part of the ribosomal stalk of the 50S ribosomal subunit. Forms a multimeric L10(L12)X complex, where L10 forms an elongated spine to which 2 to 4 L12 dimers bind in a sequential fashion. Binds GTP-bound translation factors.

In terms of biological role, forms part of the ribosomal stalk which helps the ribosome interact with GTP-bound translation factors. Is thus essential for accurate translation. This is Large ribosomal subunit protein bL12 from Helicobacter hepaticus (strain ATCC 51449 / 3B1).